The following is a 293-amino-acid chain: Mitochondrial inner membrane protease atp23 (293 aa).

The disordered stretch occupies residues 1-51 (MSPAPTTSAGPASSGIPPSSLPTSTVTEDDTKPSSSSSKANDLLPRYLTND). Residues 8–22 (SAGPASSGIPPSSLP) are compositionally biased toward low complexity. Residue H190 coordinates a divalent metal cation. The active site involves E191. A divalent metal cation is bound at residue H194.

The protein belongs to the peptidase M76 family.

It is found in the mitochondrion inner membrane. Functionally, has a dual role in the assembly of mitochondrial ATPase. Acts as a protease that removes N-terminal residues of mitochondrial ATPase CF(0) subunit 6 at the intermembrane space side. Also involved in the correct assembly of the membrane-embedded ATPase CF(0) particle, probably mediating association of subunit 6 with the subunit 9 ring. The polypeptide is Mitochondrial inner membrane protease atp23 (atp23) (Neurospora crassa (strain ATCC 24698 / 74-OR23-1A / CBS 708.71 / DSM 1257 / FGSC 987)).